The following is a 704-amino-acid chain: Polyribonucleotide nucleotidyltransferase (704 aa).

Mg(2+) is bound by residues D488 and D494. Residues 555-614 (PRITTIKINPEKIRDVIGKGGATIRALTEETGTTIELDDDGTVKIASSNGEATKEAIRRI) enclose the KH domain. Residues 624-692 (GTVYNGKVVR…RQGRVRLSMK (69 aa)) enclose the S1 motif domain.

This sequence belongs to the polyribonucleotide nucleotidyltransferase family. Component of the RNA degradosome, which is a multiprotein complex involved in RNA processing and mRNA degradation. Mg(2+) serves as cofactor.

It localises to the cytoplasm. It catalyses the reaction RNA(n+1) + phosphate = RNA(n) + a ribonucleoside 5'-diphosphate. In terms of biological role, involved in mRNA degradation. Catalyzes the phosphorolysis of single-stranded polyribonucleotides processively in the 3'- to 5'-direction. This is Polyribonucleotide nucleotidyltransferase from Shewanella halifaxensis (strain HAW-EB4).